The following is a 403-amino-acid chain: 4-hydroxy-3-methylbut-2-enyl diphosphate reductase (403 aa).

C66 contributes to the [4Fe-4S] cluster binding site. Residue H96 participates in (2E)-4-hydroxy-3-methylbut-2-enyl diphosphate binding. H96 contributes to the dimethylallyl diphosphate binding site. Residue H96 coordinates isopentenyl diphosphate. C157 contacts [4Fe-4S] cluster. H185 contacts (2E)-4-hydroxy-3-methylbut-2-enyl diphosphate. Residue H185 coordinates dimethylallyl diphosphate. Residue H185 coordinates isopentenyl diphosphate. E187 acts as the Proton donor in catalysis. T250 contributes to the (2E)-4-hydroxy-3-methylbut-2-enyl diphosphate binding site. Residue C288 coordinates [4Fe-4S] cluster. 4 residues coordinate (2E)-4-hydroxy-3-methylbut-2-enyl diphosphate: S317, S318, N319, and S379. Residues S317, S318, N319, and S379 each coordinate dimethylallyl diphosphate. Positions 317, 318, 319, and 379 each coordinate isopentenyl diphosphate.

Belongs to the IspH family. [4Fe-4S] cluster serves as cofactor.

It carries out the reaction isopentenyl diphosphate + 2 oxidized [2Fe-2S]-[ferredoxin] + H2O = (2E)-4-hydroxy-3-methylbut-2-enyl diphosphate + 2 reduced [2Fe-2S]-[ferredoxin] + 2 H(+). The enzyme catalyses dimethylallyl diphosphate + 2 oxidized [2Fe-2S]-[ferredoxin] + H2O = (2E)-4-hydroxy-3-methylbut-2-enyl diphosphate + 2 reduced [2Fe-2S]-[ferredoxin] + 2 H(+). It functions in the pathway isoprenoid biosynthesis; dimethylallyl diphosphate biosynthesis; dimethylallyl diphosphate from (2E)-4-hydroxy-3-methylbutenyl diphosphate: step 1/1. Its pathway is isoprenoid biosynthesis; isopentenyl diphosphate biosynthesis via DXP pathway; isopentenyl diphosphate from 1-deoxy-D-xylulose 5-phosphate: step 6/6. In terms of biological role, catalyzes the conversion of 1-hydroxy-2-methyl-2-(E)-butenyl 4-diphosphate (HMBPP) into a mixture of isopentenyl diphosphate (IPP) and dimethylallyl diphosphate (DMAPP). Acts in the terminal step of the DOXP/MEP pathway for isoprenoid precursor biosynthesis. This is 4-hydroxy-3-methylbut-2-enyl diphosphate reductase from Rippkaea orientalis (strain PCC 8801 / RF-1) (Cyanothece sp. (strain PCC 8801)).